We begin with the raw amino-acid sequence, 651 residues long: Maternal embryonic leucine zipper kinase (651 aa).

The region spanning Tyr11 to Ile263 is the Protein kinase domain. ATP contacts are provided by residues Ile17–Val25 and Lys40. Phosphothreonine; by autocatalysis is present on Thr56. The active-site Proton acceptor is the Asp132. A Phosphotyrosine; by autocatalysis modification is found at Tyr163. Phosphothreonine; by autocatalysis is present on Thr167. Phosphoserine; by autocatalysis occurs at positions 171 and 253. The segment at Leu282–Leu321 is UBA-like. The interval Arg326–Val651 is autoinhibitory region. Residues Ser336, Ser343, and Ser356 each carry the phosphoserine; by autocatalysis modification. Tyr367 carries the phosphotyrosine modification. A Phosphoserine; by autocatalysis modification is found at Ser391. At Thr398 the chain carries Phosphothreonine; by autocatalysis. Position 407 is a phosphoserine; by autocatalysis (Ser407). At Thr409 the chain carries Phosphothreonine. At Ser431 the chain carries Phosphoserine; by autocatalysis. Thr478 carries the post-translational modification Phosphothreonine. A Phosphothreonine; by autocatalysis modification is found at Thr494. Position 498 is a phosphoserine (Ser498). The residue at position 505 (Ser505) is a Phosphoserine; by autocatalysis. The residue at position 518 (Thr518) is a Phosphothreonine. Ser529 is subject to Phosphoserine; by autocatalysis. Ser529 is modified (phosphoserine). Position 539 is a phosphothreonine; by autocatalysis (Thr539). A KA1 domain is found at Ser602–Val651.

It belongs to the protein kinase superfamily. CAMK Ser/Thr protein kinase family. SNF1 subfamily. Monomer. Interacts with ZNF622 and PPP1R8. Post-translationally, autophosphorylated: autophosphorylation of the T-loop at Thr-167 and Ser-171 is required for activation. Thr-478 phosphorylation during mitosis promotes interaction with PPP1R8. Expressed in placenta, kidney, thymus, testis, ovary and intestine.

Its subcellular location is the cell membrane. It catalyses the reaction L-tyrosyl-[protein] + ATP = O-phospho-L-tyrosyl-[protein] + ADP + H(+). It carries out the reaction L-seryl-[protein] + ATP = O-phospho-L-seryl-[protein] + ADP + H(+). The enzyme catalyses L-threonyl-[protein] + ATP = O-phospho-L-threonyl-[protein] + ADP + H(+). Its activity is regulated as follows. Activated by autophosphorylation of the T-loop at Thr-167 and Ser-171: in contrast to other members of the SNF1 subfamily, phosphorylation at Thr-167 is not mediated by STK11/LKB1 but via autophosphorylation instead. Inhibited by calcium-binding. Kinase activity is also regulated by reducing agents: dithiothreitol (DTT) or reduced glutathione are required for kinase activity in vitro; such dependence is however not due to the presence of disulfide bonds. Its function is as follows. Serine/threonine-protein kinase involved in various processes such as cell cycle regulation, self-renewal of stem cells, apoptosis and splicing regulation. Has a broad substrate specificity; phosphorylates BCL2L14, CDC25B, MAP3K5/ASK1 and ZNF622. Acts as an activator of apoptosis by phosphorylating and activating MAP3K5/ASK1. Acts as a regulator of cell cycle, notably by mediating phosphorylation of CDC25B, promoting localization of CDC25B to the centrosome and the spindle poles during mitosis. Plays a key role in cell proliferation and carcinogenesis. Required for proliferation of embryonic and postnatal multipotent neural progenitors. Phosphorylates and inhibits BCL2L14, possibly leading to affect mammary carcinogenesis by mediating inhibition of the pro-apoptotic function of BCL2L14. Also involved in the inhibition of spliceosome assembly during mitosis by phosphorylating ZNF622, thereby contributing to its redirection to the nucleus. May also play a role in primitive hematopoiesis. The protein is Maternal embryonic leucine zipper kinase (MELK) of Homo sapiens (Human).